Here is a 540-residue protein sequence, read N- to C-terminus: Phenylalanine--tRNA ligase beta subunit (540 aa).

In terms of domain architecture, B5 spans 268–343; it reads LQHKSIKITA…ITYGYNNLSP (76 aa). Residues D321, D327, E330, and E331 each contribute to the Mg(2+) site.

Belongs to the phenylalanyl-tRNA synthetase beta subunit family. Type 2 subfamily. In terms of assembly, tetramer of two alpha and two beta subunits. Requires Mg(2+) as cofactor.

The protein resides in the cytoplasm. It carries out the reaction tRNA(Phe) + L-phenylalanine + ATP = L-phenylalanyl-tRNA(Phe) + AMP + diphosphate + H(+). The sequence is that of Phenylalanine--tRNA ligase beta subunit from Sulfurisphaera tokodaii (strain DSM 16993 / JCM 10545 / NBRC 100140 / 7) (Sulfolobus tokodaii).